Reading from the N-terminus, the 97-residue chain is Small ribosomal subunit protein bS20 (97 aa).

Over residues 76-85 the composition is skewed to basic residues; it reads RNNGARKKAG. Positions 76–97 are disordered; that stretch reads RNNGARKKAGLAKALQKVSQAS. Positions 86–97 are enriched in low complexity; sequence LAKALQKVSQAS.

It belongs to the bacterial ribosomal protein bS20 family.

In terms of biological role, binds directly to 16S ribosomal RNA. This chain is Small ribosomal subunit protein bS20, found in Microcystis aeruginosa (strain NIES-843 / IAM M-2473).